A 254-amino-acid polypeptide reads, in one-letter code: Probable phosphatase Sbal223_2880 (254 aa).

Residues histidine 8, histidine 10, histidine 16, histidine 41, glutamate 74, histidine 102, histidine 132, aspartate 193, and histidine 195 each coordinate Zn(2+).

This sequence belongs to the PHP family. Zn(2+) is required as a cofactor.

This Shewanella baltica (strain OS223) protein is Probable phosphatase Sbal223_2880.